A 256-amino-acid polypeptide reads, in one-letter code: tRNA pseudouridine synthase A (256 aa).

Asp52 functions as the Nucleophile in the catalytic mechanism. A substrate-binding site is contributed by Tyr110.

This sequence belongs to the tRNA pseudouridine synthase TruA family. Homodimer.

It carries out the reaction uridine(38/39/40) in tRNA = pseudouridine(38/39/40) in tRNA. Formation of pseudouridine at positions 38, 39 and 40 in the anticodon stem and loop of transfer RNAs. In Stenotrophomonas maltophilia (strain R551-3), this protein is tRNA pseudouridine synthase A.